The primary structure comprises 321 residues: Phospho-N-acetylmuramoyl-pentapeptide-transferase (321 aa).

Transmembrane regions (helical) follow at residues Met-1–Ile-21, Met-50–Val-70, Ile-76–Ile-96, Phe-112–Val-132, Ile-140–Trp-160, Gly-176–Leu-196, Ala-200–Leu-220, Val-225–Met-245, Leu-250–Val-270, and Val-300–Val-320.

It belongs to the glycosyltransferase 4 family. MraY subfamily. Mg(2+) is required as a cofactor.

The protein localises to the cell membrane. The catalysed reaction is UDP-N-acetyl-alpha-D-muramoyl-L-alanyl-gamma-D-glutamyl-L-lysyl-D-alanyl-D-alanine + di-trans,octa-cis-undecaprenyl phosphate = Mur2Ac(oyl-L-Ala-gamma-D-Glu-L-Lys-D-Ala-D-Ala)-di-trans,octa-cis-undecaprenyl diphosphate + UMP. The protein operates within cell wall biogenesis; peptidoglycan biosynthesis. Catalyzes the initial step of the lipid cycle reactions in the biosynthesis of the cell wall peptidoglycan: transfers peptidoglycan precursor phospho-MurNAc-pentapeptide from UDP-MurNAc-pentapeptide onto the lipid carrier undecaprenyl phosphate, yielding undecaprenyl-pyrophosphoryl-MurNAc-pentapeptide, known as lipid I. The protein is Phospho-N-acetylmuramoyl-pentapeptide-transferase of Staphylococcus haemolyticus (strain JCSC1435).